The following is a 482-amino-acid chain: Glutamyl-tRNA(Gln) amidotransferase subunit A (482 aa).

Active-site charge relay system residues include K75 and S150. S174 acts as the Acyl-ester intermediate in catalysis.

It belongs to the amidase family. GatA subfamily. Heterotrimer of A, B and C subunits.

The catalysed reaction is L-glutamyl-tRNA(Gln) + L-glutamine + ATP + H2O = L-glutaminyl-tRNA(Gln) + L-glutamate + ADP + phosphate + H(+). Allows the formation of correctly charged Gln-tRNA(Gln) through the transamidation of misacylated Glu-tRNA(Gln) in organisms which lack glutaminyl-tRNA synthetase. The reaction takes place in the presence of glutamine and ATP through an activated gamma-phospho-Glu-tRNA(Gln). This Rippkaea orientalis (strain PCC 8801 / RF-1) (Cyanothece sp. (strain PCC 8801)) protein is Glutamyl-tRNA(Gln) amidotransferase subunit A.